A 351-amino-acid chain; its full sequence is Anthranilate phosphoribosyltransferase (351 aa).

5-phospho-alpha-D-ribose 1-diphosphate is bound by residues glycine 92, 95–96, threonine 100, 102–105, 120–128, and serine 132; these read GD, NIST, and KHGNRAASS. Anthranilate is bound at residue glycine 92. Serine 104 contacts Mg(2+). Asparagine 123 contacts anthranilate. Arginine 178 contacts anthranilate. Positions 236 and 237 each coordinate Mg(2+).

Belongs to the anthranilate phosphoribosyltransferase family. Homodimer. It depends on Mg(2+) as a cofactor.

The catalysed reaction is N-(5-phospho-beta-D-ribosyl)anthranilate + diphosphate = 5-phospho-alpha-D-ribose 1-diphosphate + anthranilate. The protein operates within amino-acid biosynthesis; L-tryptophan biosynthesis; L-tryptophan from chorismate: step 2/5. Functionally, catalyzes the transfer of the phosphoribosyl group of 5-phosphorylribose-1-pyrophosphate (PRPP) to anthranilate to yield N-(5'-phosphoribosyl)-anthranilate (PRA). The polypeptide is Anthranilate phosphoribosyltransferase (Deinococcus geothermalis (strain DSM 11300 / CIP 105573 / AG-3a)).